The following is a 47-amino-acid chain: MQHEFSDEEFIALISPEIEEEVEQQINLAAERQNPIIGWDEFAGYYS.

Functionally, arf may be recombination-related. This Salmonella phage P22 (Bacteriophage P22) protein is Accessory recombination function protein (arf).